The sequence spans 106 residues: Ribonuclease P protein component 4 (106 aa).

Residues Cys62, Cys65, Cys88, and Cys91 each contribute to the Zn(2+) site.

Belongs to the eukaryotic/archaeal RNase P protein component 4 family. In terms of assembly, consists of a catalytic RNA component and at least 4-5 protein subunits. It depends on Zn(2+) as a cofactor.

The protein localises to the cytoplasm. It catalyses the reaction Endonucleolytic cleavage of RNA, removing 5'-extranucleotides from tRNA precursor.. In terms of biological role, part of ribonuclease P, a protein complex that generates mature tRNA molecules by cleaving their 5'-ends. This Methanocorpusculum labreanum (strain ATCC 43576 / DSM 4855 / Z) protein is Ribonuclease P protein component 4.